The following is a 212-amino-acid chain: 3-isopropylmalate dehydratase small subunit (212 aa).

The protein belongs to the LeuD family. LeuD type 1 subfamily. As to quaternary structure, heterodimer of LeuC and LeuD.

The catalysed reaction is (2R,3S)-3-isopropylmalate = (2S)-2-isopropylmalate. Its pathway is amino-acid biosynthesis; L-leucine biosynthesis; L-leucine from 3-methyl-2-oxobutanoate: step 2/4. Functionally, catalyzes the isomerization between 2-isopropylmalate and 3-isopropylmalate, via the formation of 2-isopropylmaleate. The sequence is that of 3-isopropylmalate dehydratase small subunit from Thioalkalivibrio sulfidiphilus (strain HL-EbGR7).